We begin with the raw amino-acid sequence, 261 residues long: Cytochrome c oxidase subunit 3 (261 aa).

Residues 1–15 (MTHQTHAYHMVNPSP) lie on the Mitochondrial matrix side of the membrane. The helical transmembrane segment at 16–34 (WPLTGALSALLMSSGLTMW) threads the bilayer. Residues 35-40 (FHFNSL) lie on the Mitochondrial intermembrane side of the membrane. Residues 41–66 (ILLTTGLVTNILTMYQWWRDVIREST) form a helical membrane-spanning segment. Residues 67-72 (FQGHHT) are Mitochondrial matrix-facing. Residues 73-105 (PVVQKGLRYGMVLFIISEVLFFTGFFWAFYHSS) traverse the membrane as a helical segment. At 106–128 (LAPTPELGGCWPPTGINPLNPLE) the chain is on the mitochondrial intermembrane side. The helical transmembrane segment at 129 to 152 (VPLLNTSVLLASGVSITWAHHSLM) threads the bilayer. Topologically, residues 153-155 (EGN) are mitochondrial matrix. A helical transmembrane segment spans residues 156–183 (RKQMLQALFITIALGVYFTLLQASEYHE). Topologically, residues 184-190 (ASFTISD) are mitochondrial intermembrane. A helical transmembrane segment spans residues 191–223 (GVYGSTFFVATGFHGLHVIIGSTFLIVCFLRQL). The Mitochondrial matrix portion of the chain corresponds to 224-232 (KFHFTSDHH). A helical transmembrane segment spans residues 233–256 (FGFEAAAWYWHFVDVVWLFLYVSI). Residues 257-261 (YWWGS) are Mitochondrial intermembrane-facing.

Belongs to the cytochrome c oxidase subunit 3 family. As to quaternary structure, component of the cytochrome c oxidase (complex IV, CIV), a multisubunit enzyme composed of 14 subunits. The complex is composed of a catalytic core of 3 subunits MT-CO1, MT-CO2 and MT-CO3, encoded in the mitochondrial DNA, and 11 supernumerary subunits COX4I, COX5A, COX5B, COX6A, COX6B, COX6C, COX7A, COX7B, COX7C, COX8 and NDUFA4, which are encoded in the nuclear genome. The complex exists as a monomer or a dimer and forms supercomplexes (SCs) in the inner mitochondrial membrane with NADH-ubiquinone oxidoreductase (complex I, CI) and ubiquinol-cytochrome c oxidoreductase (cytochrome b-c1 complex, complex III, CIII), resulting in different assemblies (supercomplex SCI(1)III(2)IV(1) and megacomplex MCI(2)III(2)IV(2)).

The protein resides in the mitochondrion inner membrane. It catalyses the reaction 4 Fe(II)-[cytochrome c] + O2 + 8 H(+)(in) = 4 Fe(III)-[cytochrome c] + 2 H2O + 4 H(+)(out). Functionally, component of the cytochrome c oxidase, the last enzyme in the mitochondrial electron transport chain which drives oxidative phosphorylation. The respiratory chain contains 3 multisubunit complexes succinate dehydrogenase (complex II, CII), ubiquinol-cytochrome c oxidoreductase (cytochrome b-c1 complex, complex III, CIII) and cytochrome c oxidase (complex IV, CIV), that cooperate to transfer electrons derived from NADH and succinate to molecular oxygen, creating an electrochemical gradient over the inner membrane that drives transmembrane transport and the ATP synthase. Cytochrome c oxidase is the component of the respiratory chain that catalyzes the reduction of oxygen to water. Electrons originating from reduced cytochrome c in the intermembrane space (IMS) are transferred via the dinuclear copper A center (CU(A)) of subunit 2 and heme A of subunit 1 to the active site in subunit 1, a binuclear center (BNC) formed by heme A3 and copper B (CU(B)). The BNC reduces molecular oxygen to 2 water molecules using 4 electrons from cytochrome c in the IMS and 4 protons from the mitochondrial matrix. This is Cytochrome c oxidase subunit 3 (MT-CO3) from Hippopotamus amphibius (Hippopotamus).